A 601-amino-acid polypeptide reads, in one-letter code: Glutathione-regulated potassium-efflux system protein KefB (601 aa).

13 consecutive transmembrane segments (helical) span residues 4-24 (SDFLLAGVLFLFAAVAAVPLA), 29-49 (IGAVLGYLLAGIAIGPWGLGF), 55-75 (EILHFSELGVVFLMFIIGLEL), 87-107 (IFGVGAAQVLLSAALLAGLLM), 115-135 (AAVVGGIGLAMSSTAMALQLM), 152-172 (VLLFQDLAVIPALALVPLLAG), 177-197 (HFDWMKIGMKVLAFVGMLIGG), 207-227 (FIAASGVREVFTAATLLLVLG), 230-250 (LFMDALGLSMALGTFIAGVLL), 268-288 (GLLLGLFFISVGMSLNLGVLY), 291-311 (LLWVVISVVVLVAVKILVLYL), 324-344 (MQFAGVLSQGGEFAFVLFSTA), and 356-376 (ALLLVTVTLSMMTTPLLMKLV). In terms of domain architecture, RCK N-terminal spans 400–519 (KPQVIVVGFG…AGVTQFSRET (120 aa)).

Belongs to the monovalent cation:proton antiporter 2 (CPA2) transporter (TC 2.A.37) family. KefB subfamily. In terms of assembly, interacts with the regulatory subunit KefG.

Its subcellular location is the cell inner membrane. In terms of biological role, pore-forming subunit of a potassium efflux system that confers protection against electrophiles. Catalyzes K(+)/H(+) antiport. The polypeptide is Glutathione-regulated potassium-efflux system protein KefB (Shigella sonnei (strain Ss046)).